Here is a 364-residue protein sequence, read N- to C-terminus: RNA-binding protein ZC3H11 (364 aa).

The segment at 64–92 (RYKTKLCKNFVQYGTCPYDIRCMFAHGEE) adopts a C3H1-type zinc-finger fold. The MKT1-binding motif motif lies at 194–199 (VRHNPY). Residues 340–364 (EQSQSHLKREGNEGRGEGLHMFLSL) form a disordered region. A compositionally biased stretch (basic and acidic residues) spans 346-357 (LKREGNEGRGEG).

As to quaternary structure, interacts (via MKT1-binding motif) with MKT1. Interacts with PBP1 (via C-terminus); the interaction is direct. Phosphorylated at the N-terminus. CK1.2-dependent phosphorylation may lead to proteasome-dependent degradation of ZC3H11 in absence of stress.

The protein resides in the cytoplasm. Its function is as follows. RNA-binding protein involved in regulation of mRNA stability. Binds AU-rich regions in the 3'-UTR of mRNAs and promotes their stabilization by recruiting a MKT1-containing complex. Stabilizes chaperone mRNAs during stress that causes an accumulation of misfolded or unfolded proteins in the cytoplasm. The chain is RNA-binding protein ZC3H11 from Trypanosoma brucei brucei (strain 927/4 GUTat10.1).